We begin with the raw amino-acid sequence, 1436 residues long: DNA-directed RNA polymerase subunit beta (1436 aa).

Belongs to the RNA polymerase beta chain family. In terms of assembly, the RNAP catalytic core consists of 2 alpha, 1 beta, 1 beta' and 1 omega subunit. When a sigma factor is associated with the core the holoenzyme is formed, which can initiate transcription.

The enzyme catalyses RNA(n) + a ribonucleoside 5'-triphosphate = RNA(n+1) + diphosphate. Its function is as follows. DNA-dependent RNA polymerase catalyzes the transcription of DNA into RNA using the four ribonucleoside triphosphates as substrates. The sequence is that of DNA-directed RNA polymerase subunit beta from Wolbachia pipientis.